The following is a 266-amino-acid chain: Putative pyruvate, phosphate dikinase regulatory protein (266 aa).

147–154 (GLSRTSKT) serves as a coordination point for ADP.

The protein belongs to the pyruvate, phosphate/water dikinase regulatory protein family. PDRP subfamily.

It catalyses the reaction N(tele)-phospho-L-histidyl/L-threonyl-[pyruvate, phosphate dikinase] + ADP = N(tele)-phospho-L-histidyl/O-phospho-L-threonyl-[pyruvate, phosphate dikinase] + AMP + H(+). The enzyme catalyses N(tele)-phospho-L-histidyl/O-phospho-L-threonyl-[pyruvate, phosphate dikinase] + phosphate + H(+) = N(tele)-phospho-L-histidyl/L-threonyl-[pyruvate, phosphate dikinase] + diphosphate. Its function is as follows. Bifunctional serine/threonine kinase and phosphorylase involved in the regulation of the pyruvate, phosphate dikinase (PPDK) by catalyzing its phosphorylation/dephosphorylation. The protein is Putative pyruvate, phosphate dikinase regulatory protein of Clostridium perfringens (strain 13 / Type A).